An 86-amino-acid chain; its full sequence is Omega-theraphotoxin-Hhn1a 2 (86 aa).

Positions 1–21 are cleaved as a signal peptide; sequence MKSIVFVALLGLALLAVVCSA. Positions 22 to 50 are excised as a propeptide; the sequence is SEDAHKELLKEVVRAMVVDKTDAVQAEER. Disulfide bonds link C52–C66, C59–C71, and C65–C78.

The protein belongs to the neurotoxin 10 (Hwtx-1) family. 17 (Hntx-9) subfamily. In terms of tissue distribution, expressed by the venom gland.

The protein resides in the secreted. Ion channel inhibitor. In Cyriopagopus hainanus (Chinese bird spider), this protein is Omega-theraphotoxin-Hhn1a 2.